The chain runs to 363 residues: MDFEDYNSTYEDSYTDDFDTIVALEEFSPLEGRVVRIFLVVVYSIICFLGILGNGLVIVIATFKMKKTVNTVWFLNLAVADFLFNVFLPIHIAYAAMDYHWVFGTAMCKISNFLLIHNMYTSVFLLTVISFDRCISVLLPVWSQNHRSIRLAYMACVVIWVLAFFLSSPSLVFRDTAHLHGKISCFNNFSLSATSSSSWPTHPQMDTVGFGRQMVVTITRFLCGFLVPVLIISACYFTIVYKLRRNRLAKTKKPFKIIVTIIITFFLCWCPYHTLYLLELHHRAMPGSVFSLGVPLATAIAIANSCMNPILYVFMGQDFKKFKVALFSRLVNALSEDTGHSSYPSHRSFTKMSSMNERETSML.

Residues Met1–Leu39 lie on the Extracellular side of the membrane. N-linked (GlcNAc...) asparagine glycosylation occurs at Asn7. Residues Val40–Ile60 traverse the membrane as a helical segment. At Ala61–Thr71 the chain is on the cytoplasmic side. The helical transmembrane segment at Val72 to Ile92 threads the bilayer. Residues Ala93 to Lys109 are Extracellular-facing. A disulfide bond links Cys108 and Cys185. The helical transmembrane segment at Ile110 to Ser130 threads the bilayer. Topologically, residues Phe131–Ala152 are cytoplasmic. The helical transmembrane segment at Tyr153 to Phe173 threads the bilayer. At Arg174 to Arg220 the chain is on the extracellular side. Asn188 is a glycosylation site (N-linked (GlcNAc...) asparagine). A helical membrane pass occupies residues Phe221–Tyr241. At Lys242–Lys256 the chain is on the cytoplasmic side. The helical transmembrane segment at Ile257–Leu277 threads the bilayer. Residues Leu278–Arg283 lie on the Extracellular side of the membrane. A helical membrane pass occupies residues Ala284–Asn304. The Cytoplasmic portion of the chain corresponds to Ser305–Leu363. Position 335 is a phosphoserine (Ser335). The disordered stretch occupies residues Asp337 to Leu363. Thr338 is subject to Phosphothreonine. Polar residues predominate over residues His340 to Met355. 3 positions are modified to phosphoserine: Ser345, Ser348, and Ser354.

The protein belongs to the chemokine-like receptor (CMKLR) family. As to expression, predominantly expressed in spleen and temperately in adipose tissue.

It localises to the cell membrane. Its function is as follows. Receptor for the chemoattractant adipokine chemerin/RARRES2 and for the omega-3 fatty acid derived molecule resolvin E1. Interaction with RARRES2 initiates activation of G proteins G(i)/G(o) and beta-arrestin pathways inducing cellular responses via second messenger pathways such as intracellular calcium mobilization, phosphorylation of MAP kinases MAPK1/MAPK3 (ERK1/2), TYRO3, MAPK14/P38MAPK and PI3K leading to multifunctional effects, like, reduction of immune responses, enhancing of adipogenesis and angionesis. Resolvin E1 down-regulates cytokine production in macrophages by reducing the activation of MAPK1/3 (ERK1/2) and NF-kappa-B. Positively regulates adipogenesis and adipocyte metabolism. The sequence is that of Chemerin-like receptor 1 (CMLKR1) from Sus scrofa (Pig).